The chain runs to 137 residues: uncharacterized protein (137 aa).

2 consecutive transmembrane segments (helical) span residues 26–42 (CSLCILSMAISTSFFAM) and 52–69 (ASIPIYPLSLTFLCGSIL).

It is found in the membrane. This is an uncharacterized protein from Saccharomyces cerevisiae (strain ATCC 204508 / S288c) (Baker's yeast).